A 164-amino-acid chain; its full sequence is Cytochrome c oxidase subunit 4, mitochondrial (164 aa).

A mitochondrion-targeting transit peptide spans 1-33; that stretch reads MFMNSMLRVSRQRAAVRSTVSLYRGFVSASIRR. The Zn(2+) site is built by Cys120, His128, Cys143, and Cys146.

It belongs to the cytochrome c oxidase subunit 5B family. In terms of assembly, component of the cytochrome c oxidase (complex IV, CIV), a multisubunit enzyme composed of a catalytic core of 3 subunits and several supernumerary subunits. The complex exists as a monomer or a dimer and forms supercomplexes (SCs) in the inner mitochondrial membrane with ubiquinol-cytochrome c oxidoreductase (cytochrome b-c1 complex, complex III, CIII).

The protein resides in the mitochondrion inner membrane. Its pathway is energy metabolism; oxidative phosphorylation. Functionally, component of the cytochrome c oxidase, the last enzyme in the mitochondrial electron transport chain which drives oxidative phosphorylation. The respiratory chain contains 3 multisubunit complexes succinate dehydrogenase (complex II, CII), ubiquinol-cytochrome c oxidoreductase (cytochrome b-c1 complex, complex III, CIII) and cytochrome c oxidase (complex IV, CIV), that cooperate to transfer electrons derived from NADH and succinate to molecular oxygen, creating an electrochemical gradient over the inner membrane that drives transmembrane transport and the ATP synthase. Cytochrome c oxidase is the component of the respiratory chain that catalyzes the reduction of oxygen to water. Electrons originating from reduced cytochrome c in the intermembrane space (IMS) are transferred via the dinuclear copper A center (CU(A)) of subunit 2 and heme A of subunit 1 to the active site in subunit 1, a binuclear center (BNC) formed by heme A3 and copper B (CU(B)). The BNC reduces molecular oxygen to 2 water molecules using 4 electrons from cytochrome c in the IMS and 4 protons from the mitochondrial matrix. The sequence is that of Cytochrome c oxidase subunit 4, mitochondrial (cox4) from Schizosaccharomyces pombe (strain 972 / ATCC 24843) (Fission yeast).